We begin with the raw amino-acid sequence, 204 residues long: ATP phosphoribosyltransferase (204 aa).

The protein belongs to the ATP phosphoribosyltransferase family. Short subfamily. As to quaternary structure, heteromultimer composed of HisG and HisZ subunits.

It is found in the cytoplasm. The catalysed reaction is 1-(5-phospho-beta-D-ribosyl)-ATP + diphosphate = 5-phospho-alpha-D-ribose 1-diphosphate + ATP. It functions in the pathway amino-acid biosynthesis; L-histidine biosynthesis; L-histidine from 5-phospho-alpha-D-ribose 1-diphosphate: step 1/9. Catalyzes the condensation of ATP and 5-phosphoribose 1-diphosphate to form N'-(5'-phosphoribosyl)-ATP (PR-ATP). Has a crucial role in the pathway because the rate of histidine biosynthesis seems to be controlled primarily by regulation of HisG enzymatic activity. This is ATP phosphoribosyltransferase from Staphylococcus aureus (strain bovine RF122 / ET3-1).